The following is a 448-amino-acid chain: UDP-N-acetylmuramoyl-L-alanine--L-glutamate ligase (448 aa).

118-124 (GSKGKST) serves as a coordination point for ATP.

This sequence belongs to the MurCDEF family. MurD2 subfamily.

Its subcellular location is the cytoplasm. The catalysed reaction is UDP-N-acetyl-alpha-D-muramoyl-L-alanine + L-glutamate + ATP = UDP-N-acetyl-alpha-D-muramoyl-L-alanyl-L-glutamate + ADP + phosphate + H(+). It functions in the pathway cell wall biogenesis; peptidoglycan biosynthesis. Cell wall formation. Catalyzes the addition of L-glutamate to the nucleotide precursor UDP-N-acetylmuramoyl-L-alanine. The polypeptide is UDP-N-acetylmuramoyl-L-alanine--L-glutamate ligase (Salinispora tropica (strain ATCC BAA-916 / DSM 44818 / JCM 13857 / NBRC 105044 / CNB-440)).